The chain runs to 170 residues: Small ribosomal subunit protein uS9 (170 aa).

The protein belongs to the universal ribosomal protein uS9 family.

In Rhodococcus opacus (strain B4), this protein is Small ribosomal subunit protein uS9.